A 446-amino-acid chain; its full sequence is 3-phosphoshikimate 1-carboxyvinyltransferase (446 aa).

Residues K21, S22, and R26 each coordinate 3-phosphoshikimate. Residue K21 coordinates phosphoenolpyruvate. The phosphoenolpyruvate site is built by G94 and R122. 3-phosphoshikimate-binding residues include S167, Q169, D315, and K342. Q169 serves as a coordination point for phosphoenolpyruvate. Catalysis depends on D315, which acts as the Proton acceptor. Residues R346 and R388 each coordinate phosphoenolpyruvate.

It belongs to the EPSP synthase family. As to quaternary structure, monomer.

Its subcellular location is the cytoplasm. It carries out the reaction 3-phosphoshikimate + phosphoenolpyruvate = 5-O-(1-carboxyvinyl)-3-phosphoshikimate + phosphate. It participates in metabolic intermediate biosynthesis; chorismate biosynthesis; chorismate from D-erythrose 4-phosphate and phosphoenolpyruvate: step 6/7. Its function is as follows. Catalyzes the transfer of the enolpyruvyl moiety of phosphoenolpyruvate (PEP) to the 5-hydroxyl of shikimate-3-phosphate (S3P) to produce enolpyruvyl shikimate-3-phosphate and inorganic phosphate. This is 3-phosphoshikimate 1-carboxyvinyltransferase from Alkalilimnicola ehrlichii (strain ATCC BAA-1101 / DSM 17681 / MLHE-1).